The following is a 138-amino-acid chain: Small ribosomal subunit protein uS11c (138 aa).

Positions Met1–Val22 are disordered.

Belongs to the universal ribosomal protein uS11 family. In terms of assembly, part of the 30S ribosomal subunit.

The protein localises to the plastid. The polypeptide is Small ribosomal subunit protein uS11c (Cuscuta reflexa (Southern Asian dodder)).